Here is a 230-residue protein sequence, read N- to C-terminus: Claudin-2 (230 aa).

Residues 1–7 lie on the Cytoplasmic side of the membrane; it reads MASLGVQ. The chain crosses the membrane as a helical span at residues 8–28; it reads LVGYILGLLGLLGTSIAMLLP. Topologically, residues 29-81 are extracellular; the sequence is NWRTSSYVGASIVTAVGFSKGLWMECATHSTGITQCDIYSTLLGLPADIQAAQ. Residues Cys-54 and Cys-64 are joined by a disulfide bond. A helical transmembrane segment spans residues 82–102; it reads AMMVTSSAMSSLACIISVVGM. Residues 103–116 lie on the Cytoplasmic side of the membrane; the sequence is RCTVFCQDSRAKDR. The chain crosses the membrane as a helical span at residues 117–137; the sequence is VAVVGGVFFILGGILGFIPVA. Residues 138–162 lie on the Extracellular side of the membrane; the sequence is WNLHGILRDFYSPLVPDSMKFEIGE. The helical transmembrane segment at 163-183 threads the bilayer; the sequence is ALYLGIISALFSLVAGVILCF. Over 184 to 230 the chain is Cytoplasmic; sequence SCSPQGNRTNYYDGYQAQPLATRSSPRSAQQPKAKSEFNSYSLTGYV. The disordered stretch occupies residues 205-230; the sequence is TRSSPRSAQQPKAKSEFNSYSLTGYV. Lys-218 participates in a covalent cross-link: Glycyl lysine isopeptide (Lys-Gly) (interchain with G-Cter in SUMO). 2 positions are modified to phosphoserine: Ser-219 and Ser-223. The interactions with TJP1, TJP2 and TJP3 stretch occupies residues 229-230; the sequence is YV.

The protein belongs to the claudin family. As to quaternary structure, can form homo- and heteropolymers with other claudins to mediate paracellular barrier and channel functions of tight junctions in response to physiological stimuli. Homopolymers interact with CLDN3, but not CLDN1, homopolymers. Directly interacts with TJP1/ZO-1, TJP2/ZO-2 and TJP3/ZO-3. In terms of processing, the disulfide bond is necessary for pore formation, but is not required for correct protein trafficking. In terms of tissue distribution, expressed in the kidney, liver and intestine, with higher levels in the ileum than in the jejunum. Low levels in the brain. Expressed in colonic epithelium (at protein level). Expressed in the perivenous regions, bile ducts, and gallbladder epithelium (at protein level).

The protein localises to the cell junction. The protein resides in the tight junction. It localises to the cell membrane. It catalyses the reaction Na(+)(in) = Na(+)(out). The enzyme catalyses K(+)(in) = K(+)(out). It carries out the reaction Rb(+)(in) = Rb(+)(out). The catalysed reaction is Li(+)(in) = Li(+)(out). It catalyses the reaction Cs(+)(in) = Cs(+)(out). The enzyme catalyses Ca(2+)(in) = Ca(2+)(out). It carries out the reaction methylamine(out) = methylamine(in). The catalysed reaction is choline(out) = choline(in). It catalyses the reaction H2O(in) = H2O(out). With respect to regulation, the channel permeability is down-regulated at acidic pH. Forms paracellular channels: polymerizes in tight junction strands with cation- and water-selective channels through the strands, conveying epithelial permeability in a process known as paracellular tight junction permeability. In intestinal epithelium, allows for sodium and water fluxes from the peritoneal side to the lumen of the intestine to regulate nutrient absorption and clear enteric pathogens as part of mucosal immune response. In kidney, allows passive sodium and calcium reabsorption across proximal tubules from the lumen back to the bloodstream. In the hepatobiliary tract, allows paracellular water and cation fluxes in the hepatic perivenous areas and biliary epithelium to generate bile flow and maintain osmotic gradients. This Mus musculus (Mouse) protein is Claudin-2.